Consider the following 648-residue polypeptide: Acetyl-coenzyme A synthetase (648 aa).

CoA-binding positions include 191 to 194 (RGGR), Thr-310, and Asn-334. ATP contacts are provided by residues 386–388 (GEP), 410–415 (DTWWQT), Asp-499, and Arg-514. Residue Ser-522 coordinates CoA. Arg-525 is a binding site for ATP. Mg(2+)-binding residues include Val-536, His-538, and Ile-541. Arg-583 is a CoA binding site. Position 608 is an N6-acetyllysine (Lys-608).

The protein belongs to the ATP-dependent AMP-binding enzyme family. It depends on Mg(2+) as a cofactor. Acetylated. Deacetylation by the SIR2-homolog deacetylase activates the enzyme.

It catalyses the reaction acetate + ATP + CoA = acetyl-CoA + AMP + diphosphate. Its function is as follows. Catalyzes the conversion of acetate into acetyl-CoA (AcCoA), an essential intermediate at the junction of anabolic and catabolic pathways. AcsA undergoes a two-step reaction. In the first half reaction, AcsA combines acetate with ATP to form acetyl-adenylate (AcAMP) intermediate. In the second half reaction, it can then transfer the acetyl group from AcAMP to the sulfhydryl group of CoA, forming the product AcCoA. In Aeromonas hydrophila subsp. hydrophila (strain ATCC 7966 / DSM 30187 / BCRC 13018 / CCUG 14551 / JCM 1027 / KCTC 2358 / NCIMB 9240 / NCTC 8049), this protein is Acetyl-coenzyme A synthetase.